A 113-amino-acid chain; its full sequence is Endoribonuclease SymE (113 aa).

Residues 29–74 (SRYPDYSRIPAITLKGQWLEAAGFATGTVVDVKVMEGCIVLTAQPP) enclose the SpoVT-AbrB domain.

The protein belongs to the SymE family.

It localises to the cytoplasm. In terms of biological role, involved in the degradation and recycling of damaged RNA. It is itself a target for degradation by the ATP-dependent protease Lon. The chain is Endoribonuclease SymE from Escherichia coli (strain 55989 / EAEC).